Consider the following 101-residue polypeptide: Small ribosomal subunit protein uS14 (101 aa).

The segment covering 1–10 has biased composition (basic and acidic residues); sequence MAKKSSIEKN. Residues 1-23 are disordered; it reads MAKKSSIEKNNRRKKMTKNAAPK. The segment covering 11-23 has biased composition (basic residues); sequence NRRKKMTKNAAPK.

It belongs to the universal ribosomal protein uS14 family. As to quaternary structure, part of the 30S ribosomal subunit. Contacts proteins S3 and S10.

In terms of biological role, binds 16S rRNA, required for the assembly of 30S particles and may also be responsible for determining the conformation of the 16S rRNA at the A site. The protein is Small ribosomal subunit protein uS14 of Rhodopseudomonas palustris (strain HaA2).